We begin with the raw amino-acid sequence, 1024 residues long: Zn(2)-C6 fungal-type transcription factor FTF1a (1024 aa).

The zn(2)-C6 fungal-type DNA-binding region spans 137–164 (CIACRRKKVRCSGEKPACKHCLHSHIPC).

The protein resides in the nucleus. Its function is as follows. Zn(2)-C6 fungal-type transcription factor that has a role in the establishment of the fungus within the plant and/or the progress of the disease. Regulates the expression of virulence factors such as SIX1 and SIX6. The protein is Zn(2)-C6 fungal-type transcription factor FTF1a of Fusarium oxysporum f. sp. lycopersici (strain 4287 / CBS 123668 / FGSC 9935 / NRRL 34936) (Fusarium vascular wilt of tomato).